We begin with the raw amino-acid sequence, 156 residues long: Transcription antitermination protein NusB (156 aa).

Belongs to the NusB family.

Functionally, involved in transcription antitermination. Required for transcription of ribosomal RNA (rRNA) genes. Binds specifically to the boxA antiterminator sequence of the ribosomal RNA (rrn) operons. The polypeptide is Transcription antitermination protein NusB (Rickettsia massiliae (strain Mtu5)).